We begin with the raw amino-acid sequence, 122 residues long: C-C motif chemokine 9 (122 aa).

The N-terminal stretch at 1–21 (MKPFHTALSFLILTTALGIWA) is a signal peptide. 3 disulfides stabilise this stretch: C57/C80, C58/C96, and C67/C107.

Belongs to the intercrine beta (chemokine CC) family. Post-translationally, the N-terminal is proteolytically cleaved by proteases associated with inflammatory responses. The processed forms CCL9(29-101), CCL9(30-101) and CCL9(31-101) exhibit increase in CCR1-mediated signaling and chemotaxis assays in vitro. In terms of tissue distribution, expressed mainly in the liver, lung, and the thymus, although some expression has been detected in a wide variety of tissues except brain.

It localises to the secreted. Monokine with inflammatory, pyrogenic and chemokinetic properties. Circulates at high concentrations in the blood of healthy animals. Binding to a high-affinity receptor activates calcium release in neutrophils. It also inhibits colony formation of bone marrow myeloid immature progenitors. This Mus musculus (Mouse) protein is C-C motif chemokine 9 (Ccl9).